Reading from the N-terminus, the 201-residue chain is Holliday junction resolvase RecU (201 aa).

Positions 87, 89, 102, and 121 each coordinate Mg(2+).

The protein belongs to the RecU family. Requires Mg(2+) as cofactor.

It localises to the cytoplasm. The enzyme catalyses Endonucleolytic cleavage at a junction such as a reciprocal single-stranded crossover between two homologous DNA duplexes (Holliday junction).. Functionally, endonuclease that resolves Holliday junction intermediates in genetic recombination. Cleaves mobile four-strand junctions by introducing symmetrical nicks in paired strands. Promotes annealing of linear ssDNA with homologous dsDNA. Required for DNA repair, homologous recombination and chromosome segregation. The sequence is that of Holliday junction resolvase RecU from Listeria monocytogenes serotype 4b (strain F2365).